The following is a 199-amino-acid chain: Peptidyl-prolyl cis-trans isomerase CYP22 (199 aa).

The 164-residue stretch at 35–198 (FFDVSIGGIP…LAVVITECGE (164 aa)) folds into the PPIase cyclophilin-type domain.

Belongs to the cyclophilin-type PPIase family. Ubiquitous.

The catalysed reaction is [protein]-peptidylproline (omega=180) = [protein]-peptidylproline (omega=0). Its function is as follows. PPIases accelerate the folding of proteins. It catalyzes the cis-trans isomerization of proline imidic peptide bonds in oligopeptides. This chain is Peptidyl-prolyl cis-trans isomerase CYP22 (CYP22), found in Arabidopsis thaliana (Mouse-ear cress).